We begin with the raw amino-acid sequence, 115 residues long: MNFALILMINTLLALLLMIITFWLPQLNGYMEKSTPYECGFDPMSPARVPFSMKFFLVAITFLLFDLEIALLLPLPWALQTTNLPLMVMSSLLLIIILALSLAYEWLQKGLDWTE.

A run of 3 helical transmembrane segments spans residues 3-23, 55-75, and 84-104; these read FALI…ITFW, FFLV…LLPL, and LPLM…SLAY.

Belongs to the complex I subunit 3 family. As to quaternary structure, core subunit of respiratory chain NADH dehydrogenase (Complex I) which is composed of 45 different subunits. Interacts with TMEM186. Interacts with TMEM242.

Its subcellular location is the mitochondrion inner membrane. It catalyses the reaction a ubiquinone + NADH + 5 H(+)(in) = a ubiquinol + NAD(+) + 4 H(+)(out). In terms of biological role, core subunit of the mitochondrial membrane respiratory chain NADH dehydrogenase (Complex I) which catalyzes electron transfer from NADH through the respiratory chain, using ubiquinone as an electron acceptor. Essential for the catalytic activity of complex I. The sequence is that of NADH-ubiquinone oxidoreductase chain 3 from Homo sapiens (Human).